A 341-amino-acid chain; its full sequence is MRIVIFIFGILLTSCFSRNGIESSSKKIKISMLVDGVLDDKSFNSSANEALLRLKKDFPENIEEVFSCAISGVYSSYVSDLDNLKRNGSDLIWLVGYMLTDASLLVSSENPKISYGIIDPIYGDDVQIPENLIAVVFRVEQGAFLAGYIAAKKSFSGKIGFIGGMKGNIVDAFRYGYESGAKYANKDIEIISEYSNSFSDVDIGRTIASKMYSKGIDVIHFAAGLAGIGVIEAAKNLGDGYYVIGADQDQSYLAPKNFITSVIKNIGDALYLITGEYIKNNNVWEGGKVVQMGLRDGVIGLPNANEFEYIKVLERKIVNKEIIVPCNQEEYEIFIKQILKL.

The first 14 residues, 1 to 14, serve as a signal peptide directing secretion; it reads MRIVIFIFGILLTS. The N-palmitoyl cysteine moiety is linked to residue Cys15. The S-diacylglycerol cysteine moiety is linked to residue Cys15.

The protein belongs to the BMP lipoprotein family. In terms of assembly, monomer.

It is found in the cell inner membrane. Functionally, may be part of an ABC-type nucleoside uptake system involved in the purine salvage pathway. This is Basic membrane protein B (bmpB) from Borreliella burgdorferi (strain ATCC 35210 / DSM 4680 / CIP 102532 / B31) (Borrelia burgdorferi).